A 272-amino-acid polypeptide reads, in one-letter code: Tryptophan synthase alpha chain (272 aa).

Residues E49 and E60 each act as proton acceptor in the active site.

This sequence belongs to the TrpA family. Tetramer of two alpha and two beta chains.

The catalysed reaction is (1S,2R)-1-C-(indol-3-yl)glycerol 3-phosphate + L-serine = D-glyceraldehyde 3-phosphate + L-tryptophan + H2O. It participates in amino-acid biosynthesis; L-tryptophan biosynthesis; L-tryptophan from chorismate: step 5/5. In terms of biological role, the alpha subunit is responsible for the aldol cleavage of indoleglycerol phosphate to indole and glyceraldehyde 3-phosphate. The sequence is that of Tryptophan synthase alpha chain from Legionella pneumophila (strain Corby).